A 480-amino-acid polypeptide reads, in one-letter code: Protein nucleotidyltransferase YdiU (480 aa).

The ATP site is built by Gly86, Gly88, Arg89, Lys109, Asp121, Gly122, Arg172, and Arg179. Residue Asp248 is the Proton acceptor of the active site. Asn249 and Asp258 together coordinate Mg(2+). Asp258 serves as a coordination point for ATP.

Belongs to the SELO family. Mg(2+) is required as a cofactor. Mn(2+) serves as cofactor.

It catalyses the reaction L-seryl-[protein] + ATP = 3-O-(5'-adenylyl)-L-seryl-[protein] + diphosphate. It carries out the reaction L-threonyl-[protein] + ATP = 3-O-(5'-adenylyl)-L-threonyl-[protein] + diphosphate. The enzyme catalyses L-tyrosyl-[protein] + ATP = O-(5'-adenylyl)-L-tyrosyl-[protein] + diphosphate. The catalysed reaction is L-histidyl-[protein] + UTP = N(tele)-(5'-uridylyl)-L-histidyl-[protein] + diphosphate. It catalyses the reaction L-seryl-[protein] + UTP = O-(5'-uridylyl)-L-seryl-[protein] + diphosphate. It carries out the reaction L-tyrosyl-[protein] + UTP = O-(5'-uridylyl)-L-tyrosyl-[protein] + diphosphate. Functionally, nucleotidyltransferase involved in the post-translational modification of proteins. It can catalyze the addition of adenosine monophosphate (AMP) or uridine monophosphate (UMP) to a protein, resulting in modifications known as AMPylation and UMPylation. This chain is Protein nucleotidyltransferase YdiU, found in Salmonella heidelberg (strain SL476).